A 90-amino-acid polypeptide reads, in one-letter code: Probable dynein light chain 2, cytoplasmic (90 aa).

It belongs to the dynein light chain family.

Its subcellular location is the cytoplasm. The protein resides in the cytoskeleton. In terms of biological role, acts as one of several non-catalytic accessory components of a dynein complex. The polypeptide is Probable dynein light chain 2, cytoplasmic (dlc-2) (Caenorhabditis elegans).